We begin with the raw amino-acid sequence, 122 residues long: Diacylglycerol kinase (122 aa).

ATP is bound by residues Arg-10 and Tyr-17. Residues Arg-10, 14–19 (AAGYSW), and 23–26 (RAAW) contribute to the substrate site. Glu-29 serves as a coordination point for ATP. Glu-29 serves as a coordination point for a divalent metal cation. Substrate contacts are provided by residues 31-35 (AFRQE), 48-51 (WLDV), Arg-56, and Glu-70. A helical transmembrane segment spans residues 35 to 55 (EGVAVLLAVVIACWLDVDAIT). The helical transmembrane segment at 57-77 (VLLISSVMLVMIVEILNSAIE) threads the bilayer. The Proton acceptor role is filled by Glu-70. ATP contacts are provided by residues Glu-77, 86–88 (EYH), and 95–96 (KD). A divalent metal cation is bound at residue Glu-77. A helical membrane pass occupies residues 98–118 (GSAAVLIAIIVAVITWCILLW). Substrate-binding positions include Ser-99 and 113-118 (WCILLW).

The protein belongs to the bacterial diacylglycerol kinase family. It depends on Mg(2+) as a cofactor.

It localises to the cell inner membrane. The enzyme catalyses a 1,2-diacyl-sn-glycerol + ATP = a 1,2-diacyl-sn-glycero-3-phosphate + ADP + H(+). Functionally, catalyzes the ATP-dependent phosphorylation of sn-l,2-diacylglycerol (DAG) to phosphatidic acid. Involved in the recycling of diacylglycerol produced as a by-product during membrane-derived oligosaccharide (MDO) biosynthesis. This chain is Diacylglycerol kinase (dgkA), found in Shigella flexneri.